Reading from the N-terminus, the 148-residue chain is Large ribosomal subunit protein bL9 (148 aa).

This sequence belongs to the bacterial ribosomal protein bL9 family.

Functionally, binds to the 23S rRNA. The sequence is that of Large ribosomal subunit protein bL9 from Ruminiclostridium cellulolyticum (strain ATCC 35319 / DSM 5812 / JCM 6584 / H10) (Clostridium cellulolyticum).